Consider the following 61-residue polypeptide: Large ribosomal subunit protein bL28 (61 aa).

The segment at 1–21 (MAKDYVTGKKTTFGNKRSHAM) is disordered.

This sequence belongs to the bacterial ribosomal protein bL28 family.

This Lactobacillus helveticus (strain DPC 4571) protein is Large ribosomal subunit protein bL28.